The sequence spans 304 residues: Agmatinase (304 aa).

Mn(2+) contacts are provided by His126, Asp149, His151, Asp153, Asp230, and Asp232.

The protein belongs to the arginase family. Agmatinase subfamily. Requires Mn(2+) as cofactor.

The enzyme catalyses agmatine + H2O = urea + putrescine. The protein operates within amine and polyamine biosynthesis; putrescine biosynthesis via agmatine pathway; putrescine from agmatine: step 1/1. Its function is as follows. Catalyzes the formation of putrescine from agmatine. This is Agmatinase from Edwardsiella ictaluri (strain 93-146).